An 85-amino-acid polypeptide reads, in one-letter code: Phosphocarrier protein HPr (85 aa).

Residues 1–85 form the HPr domain; the sequence is MFQKEIKINA…HLSKIMTELE (85 aa). The active-site Pros-phosphohistidine intermediate is His-15.

It belongs to the HPr family.

Its subcellular location is the cytoplasm. Functionally, general (non sugar-specific) component of the phosphoenolpyruvate-dependent sugar phosphotransferase system (sugar PTS). This major carbohydrate active-transport system catalyzes the phosphorylation of incoming sugar substrates concomitantly with their translocation across the cell membrane. The phosphoryl group from phosphoenolpyruvate (PEP) is transferred to the phosphoryl carrier protein HPr by enzyme I. Phospho-HPr then transfers it to the PTS EIIA domain. This chain is Phosphocarrier protein HPr (ptsH), found in Buchnera aphidicola subsp. Schizaphis graminum (strain Sg).